Consider the following 134-residue polypeptide: YGPNLPGCPPGPYPRICARYCHSDRECKAGYYCCNTGCLNICVPKPKPGLCPAIRPGPCKGNVCSNDQDCPGNQKCCGKPGCRRCYRPEKPGSCPPRKYDAGVCVIYCVGDFDCPGNEKCCGSCPRRCEKPCFD.

3 consecutive WAP domains span residues 2-45, 46-89, and 90-132; these read GPNL…CVPK, PKPG…YRPE, and KPGS…EKPC. Intrachain disulfides connect Cys-8-Cys-34, Cys-17-Cys-38, Cys-21-Cys-33, Cys-27-Cys-42, Cys-51-Cys-77, Cys-59-Cys-82, Cys-64-Cys-76, Cys-70-Cys-85, Cys-94-Cys-121, Cys-104-Cys-124, Cys-108-Cys-120, and Cys-114-Cys-128.

Nacreous layer of shell.

Inhibits growth of calcium carbonate crystals. May inhibit growth of certain crystallographic planes in the mineral phase of nacre in the shell. The polypeptide is Perlwapin (Haliotis laevigata (Smooth Australian abalone)).